A 444-amino-acid polypeptide reads, in one-letter code: Ribosomal protein uS12 methylthiotransferase RimO (444 aa).

In terms of domain architecture, MTTase N-terminal spans 4-120 (KSAALVSLGC…LKSFIRDHEA (117 aa)). Positions 13, 49, 83, 157, 161, and 164 each coordinate [4Fe-4S] cluster. The Radical SAM core domain occupies 143 to 371 (VEGRSSAYVK…LELQRGISRR (229 aa)). In terms of domain architecture, TRAM spans 374–442 (ESLVGRVLPV…DYDVEAELLS (69 aa)).

This sequence belongs to the methylthiotransferase family. RimO subfamily. The cofactor is [4Fe-4S] cluster.

It localises to the cytoplasm. The enzyme catalyses L-aspartate(89)-[ribosomal protein uS12]-hydrogen + (sulfur carrier)-SH + AH2 + 2 S-adenosyl-L-methionine = 3-methylsulfanyl-L-aspartate(89)-[ribosomal protein uS12]-hydrogen + (sulfur carrier)-H + 5'-deoxyadenosine + L-methionine + A + S-adenosyl-L-homocysteine + 2 H(+). Functionally, catalyzes the methylthiolation of an aspartic acid residue of ribosomal protein uS12. This Syntrophobacter fumaroxidans (strain DSM 10017 / MPOB) protein is Ribosomal protein uS12 methylthiotransferase RimO.